Reading from the N-terminus, the 510-residue chain is Probable gamma-aminobutyrate transaminase 3, mitochondrial (510 aa).

The N-terminal 41 residues, M1–Y41, are a transit peptide targeting the mitochondrion. G166–S167 serves as a coordination point for pyridoxal 5'-phosphate. A substrate-binding site is contributed by Y199. D306 lines the pyridoxal 5'-phosphate pocket. K335 contributes to the substrate binding site. K335 bears the N6-(pyridoxal phosphate)lysine mark.

This sequence belongs to the class-III pyridoxal-phosphate-dependent aminotransferase family.

Its subcellular location is the mitochondrion. The enzyme catalyses 4-aminobutanoate + pyruvate = succinate semialdehyde + L-alanine. The catalysed reaction is 4-aminobutanoate + glyoxylate = succinate semialdehyde + glycine. In terms of biological role, transaminase that degrades gamma-amino butyric acid (GABA). In Oryza sativa subsp. japonica (Rice), this protein is Probable gamma-aminobutyrate transaminase 3, mitochondrial.